The chain runs to 86 residues: Large ribosomal subunit protein bL27 (86 aa).

The disordered stretch occupies residues 1–24 (MATKKAGGSSRNGRDSAGRRLGVK).

The protein belongs to the bacterial ribosomal protein bL27 family.

The chain is Large ribosomal subunit protein bL27 from Rickettsia conorii (strain ATCC VR-613 / Malish 7).